Reading from the N-terminus, the 64-residue chain is Large ribosomal subunit protein uL29 (64 aa).

Belongs to the universal ribosomal protein uL29 family.

The sequence is that of Large ribosomal subunit protein uL29 (rpl29) from Methanothermobacter thermautotrophicus (strain ATCC 29096 / DSM 1053 / JCM 10044 / NBRC 100330 / Delta H) (Methanobacterium thermoautotrophicum).